The sequence spans 316 residues: Large ribosomal subunit protein uL4 (316 aa).

The segment at 1–211 is large ribosomal subunit protein uL4; sequence MASCVVKNWQ…EQLKARWGSD (211 aa). Disordered regions lie at residues 44 to 76 and 231 to 316; these read ARQG…ARAG and EDQA…ESDD. Over residues 60–71 the composition is skewed to basic residues; the sequence is GGRKPWKQKGTG. Residues 212 to 316 are unknown; that stretch reads AAPAVLETPS…TAPAEEESDD (105 aa). Low complexity predominate over residues 255–270; it reads QTPAQPEAQENQAALQ. 2 stretches are compositionally biased toward acidic residues: residues 281-291 and 301-316; these read EQTEEPQDPAE and TVEE…ESDD.

The protein belongs to the universal ribosomal protein uL4 family. In terms of assembly, part of the 50S ribosomal subunit.

Its function is as follows. One of the primary rRNA binding proteins, this protein initially binds near the 5'-end of the 23S rRNA. It is important during the early stages of 50S assembly. It makes multiple contacts with different domains of the 23S rRNA in the assembled 50S subunit and ribosome. Functionally, forms part of the polypeptide exit tunnel. The chain is Large ribosomal subunit protein uL4 from Synechococcus sp. (strain JA-2-3B'a(2-13)) (Cyanobacteria bacterium Yellowstone B-Prime).